A 118-amino-acid chain; its full sequence is Ribosome-binding factor A (118 aa).

This sequence belongs to the RbfA family. In terms of assembly, monomer. Binds 30S ribosomal subunits, but not 50S ribosomal subunits or 70S ribosomes.

The protein resides in the cytoplasm. Functionally, one of several proteins that assist in the late maturation steps of the functional core of the 30S ribosomal subunit. Associates with free 30S ribosomal subunits (but not with 30S subunits that are part of 70S ribosomes or polysomes). Required for efficient processing of 16S rRNA. May interact with the 5'-terminal helix region of 16S rRNA. This chain is Ribosome-binding factor A, found in Geobacter metallireducens (strain ATCC 53774 / DSM 7210 / GS-15).